Reading from the N-terminus, the 253-residue chain is Prolactin-7A2 (253 aa).

Residues 1-30 form the signal peptide; the sequence is MSFSFSQPCPSGALLLVVVSSLLLWENVAS. N-linked (GlcNAc...) asparagine glycans are attached at residues Asn36, Asn103, and Asn135. Intrachain disulfides connect Cys101–Cys218 and Cys235–Cys244.

Belongs to the somatotropin/prolactin family. In terms of tissue distribution, expression restricted to the placental tissue. Expressed only in the spongiotrophoblasts.

The protein localises to the secreted. In Mus musculus (Mouse), this protein is Prolactin-7A2 (Prl7a2).